Reading from the N-terminus, the 287-residue chain is Glycine--tRNA ligase alpha subunit (287 aa).

This sequence belongs to the class-II aminoacyl-tRNA synthetase family. As to quaternary structure, tetramer of two alpha and two beta subunits.

The protein localises to the cytoplasm. It catalyses the reaction tRNA(Gly) + glycine + ATP = glycyl-tRNA(Gly) + AMP + diphosphate. The chain is Glycine--tRNA ligase alpha subunit from Campylobacter curvus (strain 525.92).